The sequence spans 268 residues: 4-hydroxy-tetrahydrodipicolinate reductase (268 aa).

7 to 12 provides a ligand contact to NAD(+); it reads GANGRM. Position 34 (Arg-34) interacts with NADP(+). NAD(+) contacts are provided by residues 97-99 and 121-124; these read GTT and SENM. His-155 acts as the Proton donor/acceptor in catalysis. Residue His-156 participates in (S)-2,3,4,5-tetrahydrodipicolinate binding. Lys-159 acts as the Proton donor in catalysis. 165–166 lines the (S)-2,3,4,5-tetrahydrodipicolinate pocket; it reads GT.

Belongs to the DapB family.

It localises to the cytoplasm. The catalysed reaction is (S)-2,3,4,5-tetrahydrodipicolinate + NAD(+) + H2O = (2S,4S)-4-hydroxy-2,3,4,5-tetrahydrodipicolinate + NADH + H(+). It carries out the reaction (S)-2,3,4,5-tetrahydrodipicolinate + NADP(+) + H2O = (2S,4S)-4-hydroxy-2,3,4,5-tetrahydrodipicolinate + NADPH + H(+). The protein operates within amino-acid biosynthesis; L-lysine biosynthesis via DAP pathway; (S)-tetrahydrodipicolinate from L-aspartate: step 4/4. Its function is as follows. Catalyzes the conversion of 4-hydroxy-tetrahydrodipicolinate (HTPA) to tetrahydrodipicolinate. The polypeptide is 4-hydroxy-tetrahydrodipicolinate reductase (Bartonella bacilliformis (strain ATCC 35685 / KC583 / Herrer 020/F12,63)).